The primary structure comprises 395 residues: F-box/kelch-repeat protein At4g39570 (395 aa).

The segment covering 1–25 (MSSPERKRKRVTSTKNPSVKKKKKI) has biased composition (basic residues). The tract at residues 1–29 (MSSPERKRKRVTSTKNPSVKKKKKISPVP) is disordered. An F-box domain is found at 29-75 (PTPIPSLPDDLLVSIFARVSRLYYPILSLVSKSFRSLLRSPELYETR). Kelch repeat units follow at residues 150–197 (DIYF…VIDG) and 198–246 (KIYV…RSAY).

This is F-box/kelch-repeat protein At4g39570 from Arabidopsis thaliana (Mouse-ear cress).